A 490-amino-acid chain; its full sequence is Dual specificity protein kinase CLK3 (490 aa).

The tract at residues 1-138 (MHHCKRYRSP…SKRSSRSVED (138 aa)) is disordered. Position 7 is a phosphotyrosine (tyrosine 7). 6 positions are modified to phosphoserine: serine 9, serine 49, serine 51, serine 67, serine 76, and serine 78. 2 stretches are compositionally biased toward basic and acidic residues: residues 26-56 (YSRE…DRIP) and 63-76 (EHRD…EERS). Positions 88–116 (RSRHRRRSRERGPYRTRKHAHHCHKRRTR) are enriched in basic residues. Positions 117–130 (SCSSASSRSQQSSK) are enriched in low complexity. Serine 135 carries the post-translational modification Phosphoserine. A Protein kinase domain is found at 156–472 (YEIVGNLGEG…LAEALLHPFF (317 aa)). ATP-binding positions include 162–170 (LGEGTFGKV) and lysine 186. Aspartate 283 functions as the Proton acceptor in the catalytic mechanism.

It belongs to the protein kinase superfamily. CMGC Ser/Thr protein kinase family. Lammer subfamily. Autophosphorylates on all three types of residues.

The protein resides in the nucleus. It localises to the cytoplasm. Its subcellular location is the cytoplasmic vesicle. It is found in the secretory vesicle. The protein localises to the acrosome. It catalyses the reaction L-seryl-[protein] + ATP = O-phospho-L-seryl-[protein] + ADP + H(+). The catalysed reaction is L-threonyl-[protein] + ATP = O-phospho-L-threonyl-[protein] + ADP + H(+). It carries out the reaction L-tyrosyl-[protein] + ATP = O-phospho-L-tyrosyl-[protein] + ADP + H(+). With respect to regulation, leucettine L41 inhibits its kinase activity and affects the regulation of alternative splicing mediated by phosphorylation of SR proteins. Functionally, dual specificity kinase acting on both serine/threonine and tyrosine-containing substrates. Phosphorylates serine- and arginine-rich (SR) proteins of the spliceosomal complex. May be a constituent of a network of regulatory mechanisms that enable SR proteins to control RNA splicing and can cause redistribution of SR proteins from speckles to a diffuse nucleoplasmic distribution. Phosphorylates SRSF1 and SRSF3. Regulates the alternative splicing of tissue factor (F3) pre-mRNA in endothelial cells. The protein is Dual specificity protein kinase CLK3 (Clk3) of Rattus norvegicus (Rat).